Reading from the N-terminus, the 245-residue chain is Carboxymethylenebutenolidase homolog (245 aa).

An N-acetylalanine modification is found at alanine 2. Residue lysine 36 is modified to N6-acetyllysine. Residues cysteine 132, aspartate 179, and histidine 212 contribute to the active site. Serine 223 carries the phosphoserine modification.

It belongs to the dienelactone hydrolase family.

The protein resides in the cytoplasm. It localises to the cytosol. In terms of biological role, cysteine hydrolase. This Pongo abelii (Sumatran orangutan) protein is Carboxymethylenebutenolidase homolog (CMBL).